The primary structure comprises 261 residues: Small ribosomal subunit protein eS1 (261 aa).

A compositionally biased stretch (basic residues) spans 1–18; the sequence is MAVGKNKRISKGKKGGKK. Residues 1–23 are disordered; the sequence is MAVGKNKRISKGKKGGKKKAADP.

It belongs to the eukaryotic ribosomal protein eS1 family. Component of the small ribosomal subunit. Mature ribosomes consist of a small (40S) and a large (60S) subunit. The 40S subunit contains about 33 different proteins and 1 molecule of RNA (18S). The 60S subunit contains about 49 different proteins and 3 molecules of RNA (25S, 5.8S and 5S).

It is found in the cytoplasm. This is Small ribosomal subunit protein eS1 (cyc07) from Nicotiana tabacum (Common tobacco).